The following is a 517-amino-acid chain: Phenol 2-monooxygenase, oxygenase component DmpN (517 aa).

Fe cation contacts are provided by Glu109, Glu139, His142, Glu200, Glu234, and His237.

It belongs to the TmoA/XamoA family. As to quaternary structure, the multicomponent enzyme phenol hydroxylase is formed by DmpL (P1 component), DmpM (P2 component), DmpN (P3 component), DmpO (P4 component) and DmpP (P5 component). The oxygenase component is a dimer composed of three subunits, DmpL, DmpN and DmpO (DmpLNO). DmpN interacts with the auxiliary protein DmpK (P0 component). Fe(2+) is required as a cofactor.

The catalysed reaction is phenol + NADH + O2 + H(+) = catechol + NAD(+) + H2O. It participates in aromatic compound metabolism; phenol degradation. With respect to regulation, requires DmpM for efficient turnover. The activity of DmpLNO oxygenase is inhibited by dithiothreitol (DTT) by a mechanism apparently involving H(2)O(2) generation. Functionally, part of a multicomponent enzyme which catalyzes the degradation of phenol and some of its methylated derivatives. DmpL, DmpN and DmpO form the oxygenase component of the complex. Required for growth on phenol and for in vitro phenol hydroxylase activity. The chain is Phenol 2-monooxygenase, oxygenase component DmpN from Pseudomonas sp. (strain CF600).